A 79-amino-acid chain; its full sequence is Conotoxin Leo-O1 (79 aa).

An N-terminal signal peptide occupies residues 1–22 (MKLTCMMLVAVLFLTAWTFVTA). Positions 23 to 51 (NVSRNGLENLFPEERHEMMNPEAAKLNNR) are excised as a propeptide. 3 cysteine pairs are disulfide-bonded: Cys53–Cys70, Cys60–Cys74, and Cys69–Cys78.

Belongs to the conotoxin O1 superfamily. Expressed by the venom duct.

Its subcellular location is the secreted. The polypeptide is Conotoxin Leo-O1 (Conus leopardus (Leopard cone)).